The chain runs to 263 residues: uncharacterized protein (263 aa).

The first 22 residues, 1 to 22 (MEYLKRLALLISVIILTIFIMG), serve as a signal peptide directing secretion. A lipid anchor (N-palmitoyl cysteine) is attached at Cys23. The S-diacylglycerol cysteine moiety is linked to residue Cys23.

This sequence belongs to the staphylococcal tandem lipoprotein family.

Its subcellular location is the cell membrane. This is an uncharacterized protein from Staphylococcus aureus (strain USA300).